We begin with the raw amino-acid sequence, 167 residues long: Leukotoxin-activating lysine-acyltransferase LktC serotype A11 (167 aa).

Catalysis depends on residues His22 and Asp91.

This sequence belongs to the RTX toxin acyltransferase family.

The protein resides in the cytoplasm. The catalysed reaction is a fatty acyl-[ACP] + L-lysyl-[protein] = N(6)-(fatty acyl)-L-lysyl-[protein] + holo-[ACP] + H(+). Functionally, involved in fatty acylation of the protoxin (LktA) at two internal lysine residues, thereby converting it to the active toxin. This chain is Leukotoxin-activating lysine-acyltransferase LktC serotype A11 (lktC), found in Mannheimia haemolytica (Pasteurella haemolytica).